Here is a 1489-residue protein sequence, read N- to C-terminus: Calmodulin-regulated spectrin-associated protein 2 (1489 aa).

The region spanning 222–335 (WKLVPARYRK…FMAELFWWFE (114 aa)) is the Calponin-homology (CH) domain. The interval 375-415 (SSDFPSSGEGATFTQSHHHLPSRYSRPQAHSSASGGIRRSS) is disordered. A compositionally biased stretch (low complexity) spans 405–415 (SSASGGIRRSS). 2 positions are modified to phosphoserine: serine 416 and serine 418. The residue at position 426 (threonine 426) is a Phosphothreonine. 5 positions are modified to phosphoserine: serine 464, serine 598, serine 599, serine 611, and serine 673. Disordered stretches follow at residues 611–639 (SPIT…EDSS) and 668–730 (TREA…GSEL). Residues 668-679 (TREALSPCPSTV) are compositionally biased toward polar residues. Threonine 678 bears the Phosphothreonine mark. The residue at position 680 (serine 680) is a Phosphoserine. Over residues 680-699 (STKSQPGSSASSSSGVKMTS) the composition is skewed to low complexity. A compositionally biased stretch (basic and acidic residues) spans 703–713 (QKFRKLNHTDG). The stretch at 756 to 793 (LLASEMVHLRMKLEEKRRAIEAQKKKMEAAFTKQRQKM) forms a coiled coil. Positions 812 to 844 (LREEAAGAEDEKVYTDRAKEKESQKTDGQRSKS) are disordered. Phosphoserine is present on serine 862. Positions 887 to 926 (EILEYTKSIEKLNSSLHFLQQEMQRLSLQQEMLMQMREQQ) form a coiled coil. Residues 922–1034 (MREQQSWVIS…IQTRSFVCFG (113 aa)) are MBD region. A disordered region spans residues 925–1017 (QQSWVISPPQ…SVDSLPRLRR (93 aa)). A phosphoserine mark is found at serine 931 and serine 936. Positions 960–989 (SSDSPRPTHPSPQSSNRKSASFSVKSQRTP) are enriched in polar residues. Threonine 997, threonine 1002, and threonine 1004 each carry phosphothreonine. Phosphoserine occurs at positions 1008 and 1019. 3 disordered regions span residues 1032–1078 (CFGD…PFES), 1096–1152 (PNED…DKEQ), and 1191–1349 (KETQ…EYTG). The segment covering 1039-1075 (PQLKESKPKEEVKKEELESKGTLEQRGHNPEEKEIKP) has biased composition (basic and acidic residues). The segment covering 1105–1117 (TEPPPKPVFPPTA) has biased composition (pro residues). Basic and acidic residues-rich tracts occupy residues 1132-1152 (KPPE…DKEQ) and 1191-1252 (KETQ…DTVI). At serine 1148 the chain carries Phosphoserine. Residues 1166-1238 (KDDQKAENDM…REFIRQEYMR (73 aa)) adopt a coiled-coil conformation. Over residues 1287 to 1299 (SSLSLASLNTGDN) the composition is skewed to polar residues. A phosphoserine mark is found at serine 1313, serine 1319, and serine 1321. Polar residues predominate over residues 1334 to 1346 (NASTTSSVASGTE). In terms of domain architecture, CKK spans 1349–1483 (GPKLYKEPSA…QTKRPVTPKK (135 aa)).

Belongs to the CAMSAP1 family. Interacts with CAMSAP3. Interacts with KATNA1 and KATNB1; leading to regulate the length of CAMSAP2-decorated microtubule stretches. Interacts with a complex formed by AKAP9 and PDE4DIP isoform 13/MMG8/SMYLE, which recruits CAMSAP2 to the Golgi. Interacts with MAPRE1/EB1.

It localises to the cytoplasm. The protein localises to the cytoskeleton. It is found in the golgi apparatus. Its subcellular location is the cilium basal body. Functionally, key microtubule-organizing protein that specifically binds the minus-end of non-centrosomal microtubules and regulates their dynamics and organization. Specifically recognizes growing microtubule minus-ends and autonomously decorates and stabilizes microtubule lattice formed by microtubule minus-end polymerization. Acts on free microtubule minus-ends that are not capped by microtubule-nucleating proteins or other factors and protects microtubule minus-ends from depolymerization. In addition, it also reduces the velocity of microtubule polymerization. Through the microtubule cytoskeleton, also regulates the organization of cellular organelles including the Golgi and the early endosomes. Essential for the tethering, but not for nucleation of non-centrosomal microtubules at the Golgi: together with Golgi-associated proteins AKAP9 and PDE4DIP, required to tether non-centrosomal minus-end microtubules to the Golgi, an important step for polarized cell movement. Also acts as a regulator of neuronal polarity and development: localizes to non-centrosomal microtubule minus-ends in neurons and stabilizes non-centrosomal microtubules, which is required for neuronal polarity, axon specification and dendritic branch formation. Through the microtubule cytoskeleton, regulates the autophagosome transport. The protein is Calmodulin-regulated spectrin-associated protein 2 of Homo sapiens (Human).